The following is a 242-amino-acid chain: Uridylate kinase (242 aa).

Residue 15–18 participates in ATP binding; it reads KLSG. Glycine 57 is a binding site for UMP. ATP-binding residues include glycine 58 and arginine 62. UMP contacts are provided by residues aspartate 78 and 139–146; that span reads TGNPFFTT. Threonine 166, tyrosine 172, and aspartate 175 together coordinate ATP.

Belongs to the UMP kinase family. In terms of assembly, homohexamer.

It is found in the cytoplasm. The enzyme catalyses UMP + ATP = UDP + ADP. It participates in pyrimidine metabolism; CTP biosynthesis via de novo pathway; UDP from UMP (UMPK route): step 1/1. Inhibited by UTP. Functionally, catalyzes the reversible phosphorylation of UMP to UDP. The sequence is that of Uridylate kinase from Acinetobacter baumannii (strain ATCC 17978 / DSM 105126 / CIP 53.77 / LMG 1025 / NCDC KC755 / 5377).